Consider the following 332-residue polypeptide: tRNA U34 carboxymethyltransferase (332 aa).

Carboxy-S-adenosyl-L-methionine contacts are provided by residues K91, W105, K110, G130, 152–154 (DPS), 181–182 (IE), M196, Y200, and R315.

Belongs to the class I-like SAM-binding methyltransferase superfamily. CmoB family. Homotetramer.

It catalyses the reaction carboxy-S-adenosyl-L-methionine + 5-hydroxyuridine(34) in tRNA = 5-carboxymethoxyuridine(34) in tRNA + S-adenosyl-L-homocysteine + H(+). Its function is as follows. Catalyzes carboxymethyl transfer from carboxy-S-adenosyl-L-methionine (Cx-SAM) to 5-hydroxyuridine (ho5U) to form 5-carboxymethoxyuridine (cmo5U) at position 34 in tRNAs. This Shewanella sp. (strain W3-18-1) protein is tRNA U34 carboxymethyltransferase.